Reading from the N-terminus, the 528-residue chain is U3 small nucleolar RNA-associated protein 15 homolog (528 aa).

Residue Ala-2 is modified to N-acetylalanine. WD repeat units lie at residues 36–75, 78–117, 120–159, 162–202, 204–242, 246–285, and 287–326; these read KEFG…PVKT, RFKD…PLRQ, GHTK…EILT, EHSD…NVLC, EHGQ…QLLV, NHHK…VVHS, and DYAA…KKTS. Lys-249 participates in a covalent cross-link: Glycyl lysine isopeptide (Lys-Gly) (interchain with G-Cter in SUMO2). Residues 496–528 form a disordered region; it reads RNDSDPVPEHVPAELPEEKTESPTQPSDTDKNS. The segment covering 497-516 has biased composition (basic and acidic residues); the sequence is NDSDPVPEHVPAELPEEKTE.

As to quaternary structure, part of the small subunit (SSU) processome, composed of more than 70 proteins and the RNA chaperone small nucleolar RNA (snoRNA) U3. May be a component of the proposed t-UTP subcomplex of the ribosomal small subunit (SSU) processome containing at least UTP4, WDR43, HEATR1, UTP15, WDR75. Interacts directly with UTP4 and WDR43.

It is found in the nucleus. The protein localises to the nucleolus. In terms of biological role, ribosome biogenesis factor. Involved in nucleolar processing of pre-18S ribosomal RNA. Required for optimal pre-ribosomal RNA transcription by RNA polymerase I. Part of the small subunit (SSU) processome, first precursor of the small eukaryotic ribosomal subunit. During the assembly of the SSU processome in the nucleolus, many ribosome biogenesis factors, an RNA chaperone and ribosomal proteins associate with the nascent pre-rRNA and work in concert to generate RNA folding, modifications, rearrangements and cleavage as well as targeted degradation of pre-ribosomal RNA by the RNA exosome. In Mus musculus (Mouse), this protein is U3 small nucleolar RNA-associated protein 15 homolog (Utp15).